We begin with the raw amino-acid sequence, 282 residues long: Bifunctional protein FolD (282 aa).

NADP(+) contacts are provided by residues 166–168 and I232; that span reads GAS.

It belongs to the tetrahydrofolate dehydrogenase/cyclohydrolase family. As to quaternary structure, homodimer.

The catalysed reaction is (6R)-5,10-methylene-5,6,7,8-tetrahydrofolate + NADP(+) = (6R)-5,10-methenyltetrahydrofolate + NADPH. The enzyme catalyses (6R)-5,10-methenyltetrahydrofolate + H2O = (6R)-10-formyltetrahydrofolate + H(+). It participates in one-carbon metabolism; tetrahydrofolate interconversion. In terms of biological role, catalyzes the oxidation of 5,10-methylenetetrahydrofolate to 5,10-methenyltetrahydrofolate and then the hydrolysis of 5,10-methenyltetrahydrofolate to 10-formyltetrahydrofolate. The sequence is that of Bifunctional protein FolD from Histophilus somni (strain 129Pt) (Haemophilus somnus).